Consider the following 112-residue polypeptide: Colipase (112 aa).

An N-terminal signal peptide occupies residues 1–17; sequence MEKILILLLVALSVAYA. A propeptide spans 18–22 (enterostatin, activation peptide); the sequence is APGPR. 5 cysteine pairs are disulfide-bonded: C34/C45, C40/C56, C44/C78, C66/C86, and C80/C104.

Belongs to the colipase family. As to quaternary structure, forms a 1:1 stoichiometric complex with pancreatic lipase. As to expression, expressed by the pancreas.

The protein resides in the secreted. Functionally, colipase is a cofactor of pancreatic lipase. It allows the lipase to anchor itself to the lipid-water interface. Without colipase the enzyme is washed off by bile salts, which have an inhibitory effect on the lipase. In terms of biological role, enterostatin has a biological activity as a satiety signal. This chain is Colipase, found in Homo sapiens (Human).